The sequence spans 578 residues: Keratin, type II cytoskeletal 1b (578 aa).

A head region spans residues 1–163 (MSHQFSSQSA…DPEIQRIKTQ (163 aa)). An Omega-N-methylarginine modification is found at arginine 95. The coil 1A stretch occupies residues 164 to 200 (EREQIMVLNNKFASFIDKVRFLEQQNQVLQTKWELLQ). Residues 164–477 (EREQIMVLNN…QLLEGEESRM (314 aa)) form the IF rod domain. The linker 1 stretch occupies residues 201-219 (QVNTSTGTNNLEPLLENYI). Positions 220-311 (GDLRRQVDLL…LFLTELSQVQ (92 aa)) are coil 1B. A linker 12 region spans residues 312–335 (THISDTNVILSMDNNRSLDLDSII). Positions 336-474 (DAVRTQYELI…TYRQLLEGEE (139 aa)) are coil 2. The tract at residues 475-578 (SRMSGELQSH…TNTSHRRILE (104 aa)) is tail. Residue arginine 523 is modified to Omega-N-methylarginine. The span at 547 to 556 (GSYGGSGRSG) shows a compositional bias: gly residues. The segment at 547–578 (GSYGGSGRSGRGSSRVQIIQTSTNTSHRRILE) is disordered. The span at 562–571 (VQIIQTSTNT) shows a compositional bias: polar residues.

The protein belongs to the intermediate filament family. Post-translationally, undergoes deimination of some arginine residues (citrullination). In terms of tissue distribution, expressed exclusively in skin.

This Homo sapiens (Human) protein is Keratin, type II cytoskeletal 1b (KRT77).